The primary structure comprises 321 residues: NADPH-dependent codeinone reductase 1-1 (321 aa).

NADPH-binding residues include Thr-27 and Asp-51. Catalysis depends on proton donor residues Tyr-56 and His-119. His-119 serves as a coordination point for substrate. Residues Gln-187, Ser-214, Leu-216, Ser-264, and Arg-269 each contribute to the NADPH site.

It belongs to the aldo/keto reductase family. As to expression, latex secreting cells (laticifer cells). Expressed constitutively and ubiquitously with highest levels in capsules. Restricted to the parietal region of sieve elements adjacent or proximal to laticifers in roots, stems, leaves and carpels.

Its subcellular location is the cytoplasm. It localises to the cytosol. The catalysed reaction is codeine + NADP(+) = codeinone + NADPH + H(+). It carries out the reaction neopine + NADP(+) = neopinone + NADPH + H(+). It catalyses the reaction morphine + NADP(+) = morphinone + NADPH + H(+). The enzyme catalyses neomorphine + NADP(+) = neomorphinone + NADPH + H(+). It participates in alkaloid biosynthesis; morphine biosynthesis. Functionally, NADPH-dependent reductase involved in biosynthesis of morphinan-type benzylisoquinoline and opiate alkaloids natural products. Reduces codeinone to codeine in the penultimate step in morphine biosynthesis. Can use morphinone, hydrocodone and hydromorphone as substrate during reductive reaction with NADPH as cofactor, and morphine and dihydrocodeine as substrate during oxidative reaction with NADP as cofactor. Converts morphinone to morphine, and neomorphinone to neomorphine. Reduces irreversibly neopinone, a spontaneous isomer of codeinone, to neopine; in planta, neopine levels are limited to low levels. This is NADPH-dependent codeinone reductase 1-1 from Papaver somniferum (Opium poppy).